Here is a 460-residue protein sequence, read N- to C-terminus: ATP synthase subunit beta (460 aa).

Residue 150–157 participates in ATP binding; it reads GGAGVGKT.

Belongs to the ATPase alpha/beta chains family. As to quaternary structure, F-type ATPases have 2 components, CF(1) - the catalytic core - and CF(0) - the membrane proton channel. CF(1) has five subunits: alpha(3), beta(3), gamma(1), delta(1), epsilon(1). CF(0) has three main subunits: a(1), b(2) and c(9-12). The alpha and beta chains form an alternating ring which encloses part of the gamma chain. CF(1) is attached to CF(0) by a central stalk formed by the gamma and epsilon chains, while a peripheral stalk is formed by the delta and b chains.

It localises to the cell inner membrane. It carries out the reaction ATP + H2O + 4 H(+)(in) = ADP + phosphate + 5 H(+)(out). In terms of biological role, produces ATP from ADP in the presence of a proton gradient across the membrane. The catalytic sites are hosted primarily by the beta subunits. In Klebsiella pneumoniae subsp. pneumoniae (strain ATCC 700721 / MGH 78578), this protein is ATP synthase subunit beta.